We begin with the raw amino-acid sequence, 559 residues long: Probable D-2-hydroxyglutarate dehydrogenase, mitochondrial (559 aa).

The N-terminal 80 residues, 1–80, are a transit peptide targeting the mitochondrion; the sequence is MARRAAAGLL…MNFEVQKRSF (80 aa). In terms of domain architecture, FAD-binding PCMH-type spans 131–310; it reads YKGSSQLLLL…TKIAILTPAK (180 aa).

The protein belongs to the FAD-binding oxidoreductase/transferase type 4 family. In terms of assembly, homodimer. The cofactor is FAD.

It is found in the mitochondrion. The enzyme catalyses (R)-2-hydroxyglutarate + A = 2-oxoglutarate + AH2. In terms of biological role, catalyzes the oxidation of D-2-hydroxyglutarate to alpha-ketoglutarate. The sequence is that of Probable D-2-hydroxyglutarate dehydrogenase, mitochondrial (D2HGDH) from Oryza sativa subsp. indica (Rice).